A 232-amino-acid polypeptide reads, in one-letter code: Thiamine import ATP-binding protein ThiQ (232 aa).

Positions 2–230 (LKLTDITWLY…KASASALLGI (229 aa)) constitute an ABC transporter domain. Residue 32–39 (GPSGAGKS) participates in ATP binding.

The protein belongs to the ABC transporter superfamily. Thiamine importer (TC 3.A.1.19.1) family. As to quaternary structure, the complex is composed of two ATP-binding proteins (ThiQ), two transmembrane proteins (ThiP) and a solute-binding protein (ThiB).

The protein resides in the cell inner membrane. The catalysed reaction is thiamine(out) + ATP + H2O = thiamine(in) + ADP + phosphate + H(+). Its function is as follows. Part of the ABC transporter complex ThiBPQ involved in thiamine import. Responsible for energy coupling to the transport system. The protein is Thiamine import ATP-binding protein ThiQ of Escherichia coli O6:H1 (strain CFT073 / ATCC 700928 / UPEC).